The chain runs to 334 residues: GTP 3',8-cyclase (334 aa).

The 226-residue stretch at 11 to 236 folds into the Radical SAM core domain; that stretch reads GFNRKIDYLR…ESTESSMGPA (226 aa). Residue R20 participates in GTP binding. [4Fe-4S] cluster is bound by residues C27 and C31. S-adenosyl-L-methionine is bound at residue Y33. C34 is a [4Fe-4S] cluster binding site. A GTP-binding site is contributed by R69. G73 contacts S-adenosyl-L-methionine. T100 is a GTP binding site. S124 contributes to the S-adenosyl-L-methionine binding site. Residue K161 participates in GTP binding. M195 contacts S-adenosyl-L-methionine. Positions 260 and 263 each coordinate [4Fe-4S] cluster. Residue 265 to 267 coordinates GTP; that stretch reads RVR. C277 is a binding site for [4Fe-4S] cluster.

Belongs to the radical SAM superfamily. MoaA family. Monomer and homodimer. Requires [4Fe-4S] cluster as cofactor.

The catalysed reaction is GTP + AH2 + S-adenosyl-L-methionine = (8S)-3',8-cyclo-7,8-dihydroguanosine 5'-triphosphate + 5'-deoxyadenosine + L-methionine + A + H(+). It functions in the pathway cofactor biosynthesis; molybdopterin biosynthesis. Its function is as follows. Catalyzes the cyclization of GTP to (8S)-3',8-cyclo-7,8-dihydroguanosine 5'-triphosphate. In Pseudomonas putida (strain ATCC 700007 / DSM 6899 / JCM 31910 / BCRC 17059 / LMG 24140 / F1), this protein is GTP 3',8-cyclase.